The chain runs to 406 residues: Olfactomedin-like protein 3 (406 aa).

The signal sequence occupies residues 1–21 (MGPSAPLLLFFLLSWPGSLQG). Residues 22 to 101 (QQHHLVEYME…REVDYLETQN (80 aa)) adopt a coiled-coil conformation. Positions 134 to 401 (DCSYTISQVR…QIVYKLEMKK (268 aa)) constitute an Olfactomedin-like domain. Cysteine 135 and cysteine 328 form a disulfide bridge. Asparagine 248 carries N-linked (GlcNAc...) asparagine glycosylation.

Belongs to the OLFML3 family.

It is found in the secreted. Its function is as follows. Secreted scaffold protein that plays an essential role in dorsoventral patterning during early development. Stabilizes axial formation by restricting chordin (CHRD) activity on the dorsal side. Acts by facilitating the association between the tolloid proteases and their substrate chordin (CHRD), leading to enhance chordin (CHRD) degradation. May have matrix-related function involved in placental and embryonic development, or play a similar role in other physiological processes. The sequence is that of Olfactomedin-like protein 3 (Olfml3) from Rattus norvegicus (Rat).